Consider the following 495-residue polypeptide: Lysine--tRNA ligase (495 aa).

Positions 406 and 413 each coordinate Mg(2+).

The protein belongs to the class-II aminoacyl-tRNA synthetase family. As to quaternary structure, homodimer. Requires Mg(2+) as cofactor.

It is found in the cytoplasm. It catalyses the reaction tRNA(Lys) + L-lysine + ATP = L-lysyl-tRNA(Lys) + AMP + diphosphate. The protein is Lysine--tRNA ligase (lysS) of Staphylococcus aureus.